The chain runs to 238 residues: Flagellar L-ring protein (238 aa).

An N-terminal signal peptide occupies residues 1–17 (MIRKTLAASCAVLLMAG). Residue cysteine 18 is the site of N-palmitoyl cysteine attachment. Cysteine 18 carries S-diacylglycerol cysteine lipidation.

It belongs to the FlgH family. In terms of assembly, the basal body constitutes a major portion of the flagellar organelle and consists of four rings (L,P,S, and M) mounted on a central rod.

It is found in the cell outer membrane. The protein localises to the bacterial flagellum basal body. Its function is as follows. Assembles around the rod to form the L-ring and probably protects the motor/basal body from shearing forces during rotation. The sequence is that of Flagellar L-ring protein from Nitratidesulfovibrio vulgaris (strain ATCC 29579 / DSM 644 / CCUG 34227 / NCIMB 8303 / VKM B-1760 / Hildenborough) (Desulfovibrio vulgaris).